The primary structure comprises 311 residues: tRNA dimethylallyltransferase (311 aa).

Residue 11–18 participates in ATP binding; the sequence is GPTASGKS. Substrate is bound at residue 13-18; the sequence is TASGKS. Interaction with substrate tRNA stretches follow at residues 36–39 and 160–164; these read DSMQ and QRLIR.

Belongs to the IPP transferase family. As to quaternary structure, monomer. Mg(2+) serves as cofactor.

It carries out the reaction adenosine(37) in tRNA + dimethylallyl diphosphate = N(6)-dimethylallyladenosine(37) in tRNA + diphosphate. In terms of biological role, catalyzes the transfer of a dimethylallyl group onto the adenine at position 37 in tRNAs that read codons beginning with uridine, leading to the formation of N6-(dimethylallyl)adenosine (i(6)A). This chain is tRNA dimethylallyltransferase, found in Rickettsia typhi (strain ATCC VR-144 / Wilmington).